Consider the following 503-residue polypeptide: D-xylose-proton symporter-like 2 (503 aa).

Residues 1–15 (MALDPEQQQPISSVS) show a composition bias toward polar residues. Residues 1–32 (MALDPEQQQPISSVSREFGKSSGEISPEREPL) are disordered. At A2 the chain carries N-acetylalanine. S26 is subject to Phosphoserine. 12 helical membrane passes run 42–62 (YSVVAAILPFLFPALGGLLYG), 99–119 (GSLYGALFGSIVAFTIADVIG), 124–144 (LILAALLYLVGALVTALAPTY), 146–166 (VLIIGRVIYGVSVGLAMHAAP), 187–207 (FFIVLGMVGGYGIGSLTVNVH), 213–233 (MYATSVPLAVIMGIGMWWLPA), 305–325 (ALIIGGGLVLFQQITGQPSVL), 346–366 (VSILLGLLKLIMTGVAVVVID), 375–395 (LGGVGGMVVSLFLLGSYYLFF), 400–420 (VVAVVALLLYVGCYQLSFGPI), 437–457 (GLSLAVLVNFGANALVTFAFS), and 467–487 (ILFCGFGVICVLSLVFIFFIV).

The protein belongs to the major facilitator superfamily. Sugar transporter (TC 2.A.1.1) family.

Its subcellular location is the membrane. This chain is D-xylose-proton symporter-like 2, found in Arabidopsis thaliana (Mouse-ear cress).